A 107-amino-acid polypeptide reads, in one-letter code: Nucleoid-associated protein NE0434 (107 aa).

This sequence belongs to the YbaB/EbfC family. As to quaternary structure, homodimer.

The protein localises to the cytoplasm. It localises to the nucleoid. Functionally, binds to DNA and alters its conformation. May be involved in regulation of gene expression, nucleoid organization and DNA protection. The polypeptide is Nucleoid-associated protein NE0434 (Nitrosomonas europaea (strain ATCC 19718 / CIP 103999 / KCTC 2705 / NBRC 14298)).